The chain runs to 273 residues: Outer surface protein A (273 aa).

The signal sequence occupies residues 1–16 (MKKYLLGIGLILALIA). A lipid anchor (N-palmitoyl cysteine) is attached at Cys-17. Cys-17 is lipidated: S-diacylglycerol cysteine.

It belongs to the OspA lipoprotein family.

It is found in the cell outer membrane. The protein resides in the cell surface. Its function is as follows. Induces host (human and mouse) cytokine release by monocyte cell lines via TLR2 and CD14; nonlipidated protein does not stimulate host cells. The protein is Outer surface protein A of Borreliella burgdorferi (strain ATCC 35210 / DSM 4680 / CIP 102532 / B31) (Borrelia burgdorferi).